Here is a 440-residue protein sequence, read N- to C-terminus: MASLKRFQTLVPLDHKQGTLFEIIGEPKLPKWFHVECLEDPKRLYVEPRLLEIMFGKDGEHIPHLESMLHTLIHVNVWGPERRAEIWIFGPPPFRRDVDRMLTDLAHYCRMKLMEIEALEAGVERRRMAAHKAATQPAPVKVREAAPRPASVKVPETATQPAPVKVREAAPQPAPVQEVREAAPQQASVQEEVREAATEQAPVQEVREAATEQAPVQEVSEAATEQAPVQEVNEAATEQASVQAVREAATRPAPGKVRKAATQPAPVQVCQEATQLAPVKVREAATQPASGKVREAATQLAPVKVRKAATQLAPVKVHEAATQPAPGKVSDAATQSASVQVREAATQLSPVEATDTSQLAQVKADEAFAQHTSGEAHQVANGQSPIEVCETATGQHSLDVSRALSQKCPEVFEWETQSCLDGSYVIVQPPRDAWESFIIL.

The interval 1 to 39 (MASLKRFQTLVPLDHKQGTLFEIIGEPKLPKWFHVECLE) is involved in RNA binding. The KH; atypical domain occupies 40–118 (DPKRLYVEPR…CRMKLMEIEA (79 aa)). Residues 132-201 (KAATQPAPVK…EVREAATEQA (70 aa)) are disordered. Ser-151 is subject to Phosphoserine; by ATR. A phosphothreonine mark is found at Thr-274 and Thr-286. The interval 341-440 (VREAATQLSP…RDAWESFIIL (100 aa)) is required for interaction with NUMA1 and regulation of apoptosis in response to DNA damage. Ser-349 bears the Phosphoserine mark.

The protein belongs to the KHDC1 family. As to quaternary structure, component of the subcortical maternal complex (SCMC), at least composed of NLRP5, KHDC3, OOEP, and TLE6. Within the complex, interacts with NLRP5, OOEP and TLE6. The SCMC may facilitate translocation of its components between the nuclear and cytoplasmic compartments. Forms a scaffold complex with OOEP/FLOPED, and interacts with BLM and TRIM25 at DNA replication forks. Interacts with PARP1; the interaction is increased following the formation of DNA double-strand breaks. Interacts (via C-terminus) with NUMA1. In terms of processing, phosphorylation at Ser-151 is required to promote stalled fork restart. Detected in ovary, but not in testis or somatic tissues. In the ovary, expressed in growing oocytes.

Its subcellular location is the cytoplasm. The protein resides in the cell cortex. It is found in the nucleus. It localises to the mitochondrion. The protein localises to the cytoskeleton. Its subcellular location is the microtubule organizing center. The protein resides in the centrosome. It is found in the chromosome. Functionally, component of the subcortical maternal complex (SCMC), a multiprotein complex that plays a key role in early embryonic development. The SCMC complex is a structural constituent of cytoplasmic lattices, which consist in fibrous structures found in the cytoplasm of oocytes and preimplantation embryos. They are required to store maternal proteins critical for embryonic development, such as proteins that control epigenetic reprogramming of the preimplantation embryo, and prevent their degradation or activation. KHDC3 ensures proper spindle assembly by regulating the localization of AURKA via RHOA signaling and of PLK1 via a RHOA-independent process. Required for the localization of MAD2L1 to kinetochores to enable spindle assembly checkpoint function. As part of the OOEP-KHDC3 scaffold, recruits BLM and TRIM25 to DNA replication forks, thereby promoting the ubiquitination of BLM by TRIM25, enhancing BLM retainment at replication forks and therefore promoting stalled replication fork restart. Regulates homologous recombination-mediated DNA repair via recruitment of RAD51 to sites of DNA double-strand breaks, and sustainment of PARP1 activity, which in turn modulates downstream ATM or ATR activation. Activation of ATM or ATR in response to DNA double-strand breaks may be cell-type specific. Its role in DNA double-strand break repair is independent of its role in restarting stalled replication forks. Promotes neural stem cell neurogenesis and neuronal differentiation in the hippocampus. May regulate normal development of learning, memory and anxiety. Capable of binding RNA. The protein is KH domain-containing protein 3 of Mus musculus (Mouse).